The following is a 451-amino-acid chain: Golgi reassembly-stacking protein 2 (451 aa).

A lipid anchor (N-myristoyl glycine) is attached at G2. PDZ GRASP-type domains follow at residues 15 to 105 (EGYH…FCSF) and 111 to 199 (NVWH…YGYL). Positions 15-215 (EGYHVLRVQE…PFEEGKKISL (201 aa)) are GRASP. Dimethylated arginine occurs at positions 30 and 47. The interval 194–199 (IGYGYL) is important for membrane binding. S214 is subject to Phosphoserine. At T222 the chain carries Phosphothreonine. Position 225 is a phosphothreonine; by MAPK (T225). Positions 236–252 (LSSVSPPSLSPPGTTGV) are enriched in low complexity. 2 disordered regions span residues 236 to 255 (LSSV…VEQS) and 377 to 451 (EGSS…SEPS). Positions 410 to 424 (SSLTVDVTSPASKVP) are enriched in polar residues. At S411 the chain carries Phosphoserine. 2 positions are modified to phosphothreonine: T417 and T435. Phosphoserine occurs at positions 443 and 448.

It belongs to the GORASP family. As to quaternary structure, homodimer. Homooligomer. ER stress induces phosphorylation-dependent monomerization. Interacts with BLZF1/Golgin 45. Identified in a complex with RAB2 and GORASP2. Interacts with JAM2 and JAM3. Interacts with members of the p24 cargo receptors. Interacts with CNIH and the cytoplasmic domain of transmembrane TGFA, prior its transit in the trans-Golgi. Interacts with KCTD5. Interacts with TMED2 and TMED3. Interacts with SEC16A in response to ER stress. Interacts (via PDZ GRASP-type 1 domain) with core-glycosylated CFTR in response to ER stress. Myristoylated. Myristoylation is essential for the Golgi targeting. In terms of processing, palmitoylated. Post-translationally, phosphorylated in mitotic cells. ER stress-induced phosphorylation at Ser-443 induces monomerization and subsequent relocalization from Golgi to ER which is essential for mediating unconventional (ER/Golgi-independent) trafficking of CFTR to the cell membrane. As to expression, detected in lung, heart and testis. Colocalized in a polarized fashion in the acrosome region with JAM3 in round spermatids (at protein level).

It is found in the golgi apparatus membrane. The protein localises to the endoplasmic reticulum membrane. It localises to the golgi apparatus. Key structural protein of the Golgi apparatus. The membrane cisternae of the Golgi apparatus adhere to each other to form stacks, which are aligned side by side to form the Golgi ribbon. Acting in concert with GORASP1/GRASP65, is required for the formation and maintenance of the Golgi ribbon, and may be dispensable for the formation of stacks. However, other studies suggest that GORASP2 plays a role in assembly and membrane stacking of the Golgi cisternae, and in the process by which Golgi stacks reform after breakdown during mitosis and meiosis. May regulate the intracellular transport and presentation of a defined set of transmembrane proteins, such as transmembrane TGFA. Required for normal acrosome formation during spermiogenesis and normal male fertility, probably by promoting colocalization of JAM2 and JAM3 at contact sites between germ cells and Sertoli cells. Mediates ER stress-induced unconventional (ER/Golgi-independent) trafficking of core-glycosylated CFTR to cell membrane. The protein is Golgi reassembly-stacking protein 2 (Gorasp2) of Mus musculus (Mouse).